The chain runs to 683 residues: ATP-dependent zinc metalloprotease FtsH 2 (683 aa).

Positions 1-12 are enriched in polar residues; it reads MADQTSQNDNQN. The disordered stretch occupies residues 1–21; sequence MADQTSQNDNQNGSGLPGGGP. Residues 1-28 lie on the Cytoplasmic side of the membrane; sequence MADQTSQNDNQNGSGLPGGGPSGTGRGR. A helical transmembrane segment spans residues 29–49; sequence LIIWVIAGTLLALWAYSYWGM. The Periplasmic portion of the chain corresponds to 50 to 136; that stretch reads GASGGERISY…VTKPESSFPW (87 aa). A helical transmembrane segment spans residues 137–157; it reads GLVIMGLLPVLLLFGVGYIFL. Over 158 to 683 the chain is Cytoplasmic; it reads RRMQSQGQGL…ASGSADASGS (526 aa). 228–235 contributes to the ATP binding site; that stretch reads GPPGTGKT. His-450 serves as a coordination point for Zn(2+). Residue Glu-451 is part of the active site. Zn(2+) is bound by residues His-454 and Asp-526. A disordered region spans residues 627–683; the sequence is VNGDTDEIGHMPTTNGAAASEENGSADDHEPDEATVIEEDGESGEGRASGSADASGS. Positions 655 to 669 are enriched in acidic residues; that stretch reads HEPDEATVIEEDGES. Positions 672 to 683 are enriched in low complexity; the sequence is GRASGSADASGS.

The protein in the central section; belongs to the AAA ATPase family. It in the C-terminal section; belongs to the peptidase M41 family. In terms of assembly, homohexamer. The cofactor is Zn(2+).

It is found in the cell inner membrane. In terms of biological role, acts as a processive, ATP-dependent zinc metallopeptidase for both cytoplasmic and membrane proteins. Plays a role in the quality control of integral membrane proteins. The polypeptide is ATP-dependent zinc metalloprotease FtsH 2 (Salinibacter ruber (strain M8)).